Here is a 401-residue protein sequence, read N- to C-terminus: MIHHPPAGARDLLPLEVAQKARINDQLQQTFHRWGYQRIVTSTLEWLDTLVAGGAISANNVIQLQDSGEGRLGLRPELTASIARAVVTRMTDNQPQRLCYRANVFRNPPEGYHGKQMEFFQAGIELLFAGGVRADAEILLLLTDCLTQLGLSDWQLILGDAGLTRSLLAKLPPTLQATVRDCITRLDYVELSQLPYPDNEAKNLALQLFDLRGTVEEVLARLGKLDLQGECLGLVDRLQALLCLVAASGDGPANLVLDLSWLQPFDYYTGMVFQAVSRQADNCYVLGQGGRYDQLLSQYHPQQQSFPGTGFSLNIEELHQCLLELGTLPTSTAPIDYLVCPVDDTAEGATFRHAQQLRRQHPDRRVELDLGGRSPEELNTYAQAMAVGQIVWVGADGPVDL.

Belongs to the class-II aminoacyl-tRNA synthetase family. HisZ subfamily. As to quaternary structure, heteromultimer composed of HisG and HisZ subunits.

The protein resides in the cytoplasm. The protein operates within amino-acid biosynthesis; L-histidine biosynthesis; L-histidine from 5-phospho-alpha-D-ribose 1-diphosphate: step 1/9. In terms of biological role, required for the first step of histidine biosynthesis. May allow the feedback regulation of ATP phosphoribosyltransferase activity by histidine. The protein is ATP phosphoribosyltransferase regulatory subunit (hisZ) of Synechocystis sp. (strain ATCC 27184 / PCC 6803 / Kazusa).